The following is a 241-amino-acid chain: Homeobox protein TGIF2LX (241 aa).

2 disordered regions span residues 1 to 58 (MEAA…GNLP) and 127 to 207 (GKGA…ELVS). Over residues 10–39 (ETQSPVQKDSPAKTQSPAQDTSIMSRNNAD) the composition is skewed to polar residues. The segment at residues 48-111 (EHKKKRKGNL…INARRRILPD (64 aa)) is a DNA-binding region (homeobox; TALE-type).

This sequence belongs to the TALE/TGIF homeobox family.

It is found in the nucleus. In terms of biological role, may have a transcription role in testis. This is Homeobox protein TGIF2LX (TGIF2LX) from Pan paniscus (Pygmy chimpanzee).